Consider the following 165-residue polypeptide: Glutamyl-tRNA(Gln) amidotransferase subunit F, mitochondrial (165 aa).

A mitochondrion-targeting transit peptide spans 1 to 19 (MKSILRSTTRNLITSSRRF).

Belongs to the GatF family. Subunit of the heterotrimeric GatFAB amidotransferase (AdT) complex, composed of A, B and F subunits.

The protein localises to the mitochondrion inner membrane. It carries out the reaction L-glutamyl-tRNA(Gln) + L-glutamine + ATP + H2O = L-glutaminyl-tRNA(Gln) + L-glutamate + ADP + phosphate + H(+). Functionally, allows the formation of correctly charged Gln-tRNA(Gln) through the transamidation of misacylated Glu-tRNA(Gln) in the mitochondria. The reaction takes place in the presence of glutamine and ATP through an activated gamma-phospho-Glu-tRNA(Gln). Required for proper protein synthesis within the mitochondrion. In Candida albicans (strain SC5314 / ATCC MYA-2876) (Yeast), this protein is Glutamyl-tRNA(Gln) amidotransferase subunit F, mitochondrial.